The sequence spans 135 residues: MSLQVCVMTPERIFWNGQSEEIILPTNTGEMGVLKNHAPIITGLDVGAMLIRTEKGWTSVAIMGGFGIVGQNRVILLVNEAESADTINAEQAESDFNSAKEKLEQAQSTKQRVEANTQFKRAKARYQVVKNLSKA.

It belongs to the ATPase epsilon chain family. In terms of assembly, F-type ATPases have 2 components, CF(1) - the catalytic core - and CF(0) - the membrane proton channel. CF(1) has five subunits: alpha(3), beta(3), gamma(1), delta(1), epsilon(1). CF(0) has three main subunits: a, b and c.

The protein resides in the plastid. The protein localises to the chloroplast thylakoid membrane. Produces ATP from ADP in the presence of a proton gradient across the membrane. The chain is ATP synthase epsilon chain, chloroplastic from Stigeoclonium helveticum (Green alga).